Consider the following 147-residue polypeptide: Angiogenin (147 aa).

Positions 1 to 24 (MVMGLGVLLLVFVLGLGLTPPTLA) are cleaved as a signal peptide. The residue at position 25 (Gln-25) is a Pyrrolidone carboxylic acid. The Proton acceptor role is filled by His-37. TRNA-binding residues include Arg-45 and Asp-46. Intrachain disulfides connect Cys-50–Cys-105, Cys-63–Cys-116, and Cys-81–Cys-131. The Nucleolar localization signal motif lies at 55-59 (RRRGL). The tRNA site is built by Cys-105 and Val-127. His-138 (proton donor) is an active-site residue.

Belongs to the pancreatic ribonuclease family. As to quaternary structure, homodimer. Interacts with RNH1; inhibiting ANG ribonuclease activity. Interacts with PCNA.

It is found in the secreted. The protein resides in the nucleus. It localises to the nucleolus. Its subcellular location is the cytoplasm. The protein localises to the stress granule. Its activity is regulated as follows. Has weak tRNA ribonuclease activity by itself due to partial autoinhibition by its C-terminus, which folds into a short alpha-helix that partially occludes the substrate-binding site. In absence of stress, the ribonuclease activity is inhibited by RNH1 in the cytoplasm. In response to stress, dissociates from RNH1 in the cytoplasm and associates with cytoplasmic ribosomes with vacant A-sites: ribosomes directly activate the tRNA ribonuclease activity of ANG by refolding the C-terminal alpha-helix. In response to stress, the angiogenic activity of ANG is inhibited by RNH1 in the nucleus. Functionally, secreted ribonuclease that can either promote or restrict cell proliferation of target cells, depending on the context. Endocytosed in target cells via its receptor PLXNB2 and translocates to the cytoplasm or nucleus. Under stress conditions, localizes to the cytoplasm and promotes the assembly of stress granules (SGs): specifically cleaves a subset of tRNAs within anticodon loops to produce tRNA-derived stress-induced fragments (tiRNAs), resulting in translation repression and inhibition of cell proliferation. tiRNas also prevent formation of apoptosome, thereby promoting cell survival. Preferentially cleaves RNAs between a pyrimidine and an adenosine residue, suggesting that it cleaves the anticodon loop of tRNA(Ala) (32-UUAGCAU-38) after positions 33 and 36. Cleaves a subset of tRNAs, including tRNA(Ala), tRNA(Glu), tRNA(Gly), tRNA(Lys), tRNA(Val), tRNA(His), tRNA(Asp) and tRNA(Sec). Under growth conditions and in differentiated cells, translocates to the nucleus and stimulates ribosomal RNA (rRNA) transcription, including that containing the initiation site sequences of 45S rRNA, thereby promoting cell growth and proliferation. Angiogenin induces vascularization of normal and malignant tissues via its ability to promote rRNA transcription. Involved in hematopoietic stem and progenitor cell (HSPC) growth and survival by promoting rRNA transcription in growth conditions and inhibiting translation in response to stress, respectively. Mediates the crosstalk between myeloid and intestinal epithelial cells to protect the intestinal epithelial barrier integrity: secreted by myeloid cells and promotes intestinal epithelial cells proliferation and survival. Also mediates osteoclast-endothelial cell crosstalk in growing bone: produced by osteoclasts and protects the neighboring vascular cells against senescence by promoting rRNA transcription. The chain is Angiogenin (ANG) from Gorilla gorilla gorilla (Western lowland gorilla).